A 60-amino-acid polypeptide reads, in one-letter code: Large ribosomal subunit protein bL32 (60 aa).

This sequence belongs to the bacterial ribosomal protein bL32 family.

This chain is Large ribosomal subunit protein bL32, found in Streptococcus gordonii (strain Challis / ATCC 35105 / BCRC 15272 / CH1 / DL1 / V288).